The following is a 307-amino-acid chain: Methionyl-tRNA formyltransferase (307 aa).

Residue 108–111 (SLLP) coordinates (6S)-5,6,7,8-tetrahydrofolate.

It belongs to the Fmt family.

The enzyme catalyses L-methionyl-tRNA(fMet) + (6R)-10-formyltetrahydrofolate = N-formyl-L-methionyl-tRNA(fMet) + (6S)-5,6,7,8-tetrahydrofolate + H(+). Functionally, attaches a formyl group to the free amino group of methionyl-tRNA(fMet). The formyl group appears to play a dual role in the initiator identity of N-formylmethionyl-tRNA by promoting its recognition by IF2 and preventing the misappropriation of this tRNA by the elongation apparatus. This is Methionyl-tRNA formyltransferase from Xylella fastidiosa (strain M23).